The primary structure comprises 787 residues: Alpha-glucosidase 2 (787 aa).

Residues D407 and E410 contribute to the active site. The Proton donor role is filled by D484.

The protein belongs to the glycosyl hydrolase 31 family. As to quaternary structure, homohexamer.

It catalyses the reaction Hydrolysis of terminal, non-reducing (1-&gt;4)-linked alpha-D-glucose residues with release of alpha-D-glucose.. This chain is Alpha-glucosidase 2, found in Bacillus thermoamyloliquefaciens.